A 204-amino-acid chain; its full sequence is uncharacterized protein (204 aa).

The tract at residues 1–20 is disordered; that stretch reads MQNPLPEVMSPEHDKRTTTP.

This is an uncharacterized protein from Frog virus 3 (isolate Goorha) (FV-3).